The primary structure comprises 388 residues: MVLPTAPEPPTLLGYHRILSPSAGVRVSPLCLGTMSFGNGWKGVMGECDQATSFNMLDTFYESGGNFIDVANFYQGGDTERWVGEWMAQRQNRDEIVLSTKYTMGYTMFGPQKIKSNFQGNHAKSLRLSVKASLQKLQTDYIDLLYVHMWDFTTSVEEVMRSLNHLVANGKVLYLGVSDTPAWLVVKCNAFARANGLTPFSVYQGHWSSAFRDFERDILPMCESEGMGLAPWGVLGRGQFRSAEEFSREGRKMGPQDEKHRRLGEKLDQMAQQKNTKATSIAQAYVMHKAPYVFPVIGGRKVEHLKENIEALGLVLSEEEIREIDDAEPFDVGFPMNFLFETPTQSYRTNMTSKDIWQLSCNTRLETVPKQQPIEPLQGAKYFGSASK.

NADP(+) is bound at residue aspartate 69. Catalysis depends on tyrosine 74, which acts as the Proton donor. Histidine 148 provides a ligand contact to substrate. Residues 178 to 179 (SD), glutamine 204, 233 to 243 (GVLGRGQFRSA), and 300 to 308 (RKVEHLKEN) each bind NADP(+).

The protein belongs to the aldo/keto reductase family. Aldo/keto reductase 2 subfamily.

It participates in mycotoxin biosynthesis; aflatoxin biosynthesis. Norsolorinic acid reductase; part of the gene cluster that mediates the biosynthesis of aflatoxins, a group of polyketide-derived furanocoumarins, and part of the most toxic and carcinogenic compounds among the known mycotoxins. The four major aflatoxins produced by A.parasiticus are aflatoxin B1 (AFB1), aflatoxin B2 (AFB2), aflatoxin G1 (AFG1) and aflatoxin G2 (AFG2). Within the aflatoxin pathway, the norsolorinic acid reductase aflE may play a role in the conversion of norsolorinic acid (NOR) to averantin (AVN). The biosynthesis of aflatoxins begins with the norsolorinic acid synthase aflC that combines a hexanoyl starter unit produced by the fatty acid synthase aflA/aflB and 7 malonyl-CoA extender units to synthesize the precursor NOR. The second step is the conversion of NOR to averantin and requires the norsolorinic acid ketoreductase aflD, which catalyzes the dehydration of norsolorinic acid to form (1'S)-averantin. The norsolorinic acid reductases aflE and aflF may also play a role in the conversion of NOR to AVN. The cytochrome P450 monooxygenase aflG then catalyzes the hydroxylation of AVN to 5'hydroxyaverantin (HAVN). The next step is performed by the 5'-hydroxyaverantin dehydrogenase aflH that transforms HAVN to 5'-oxoaverantin (OAVN) which is further converted to averufin (AVF) by aflK that plays a dual role in the pathway, as a 5'-oxoaverantin cyclase that mediates conversion of 5'-oxoaverantin, as well as a versicolorin B synthase in a later step in the pathway. The averufin oxidase aflI catalyzes the conversion of AVF to versiconal hemiacetal acetate (VHA). VHA is then the substrate for the versiconal hemiacetal acetate esterase aflJ to yield versiconal (VAL). Versicolorin B synthase aflK then converts VAL to versicolorin B (VERB) by closing the bisfuran ring of aflatoxin which is required for DNA-binding, thus giving to aflatoxin its activity as a mutagen. Then, the activity of the versicolorin B desaturase aflL leads to versicolorin A (VERA). A branch point starts from VERB since it can also be converted to dihydrodemethylsterigmatocystin (DMDHST), probably also by aflL, VERA being a precursor for aflatoxins B1 and G1, and DMDHST for aflatoxins B2 and G2. Next, the versicolorin reductase aflM and the cytochrome P450 monooxygenase aflN are involved in conversion of VERA to demethylsterigmatocystin (DMST). AflX and aflY seem also involved in this step, through probable aflX-mediated epoxide ring-opening step following versicolorin A oxidation and aflY-mediated Baeyer-Villiger oxidation required for the formation of the xanthone ring. The methyltransferase aflO then leads to the modification of DMST to sterigmatocystin (ST), and of DMDHST to dihydrosterigmatocystin (DHST). Both ST and DHST are then substrates of the O-methyltransferase aflP to yield O-methylsterigmatocystin (OMST) and dihydro-O-methylsterigmatocystin (DHOMST), respectively. Finally OMST is converted to aflatoxins B1 and G1, and DHOMST to aflatoxins B2 and G2, via the action of several enzymes including O-methylsterigmatocystin oxidoreductase aflQ, the cytochrome P450 monooxygenase aflU, but also the NADH-dependent flavin oxidoreductase nadA which is specifically required for the synthesis of AFG1. This chain is Norsolorinic acid reductase A, found in Aspergillus parasiticus (strain ATCC 56775 / NRRL 5862 / SRRC 143 / SU-1).